Reading from the N-terminus, the 144-residue chain is MRLNTIKPGEGSKKTAKRVGRGIGSGLGKTCGRGHKGQKSRSGGFHKVGFEGGQMPLQRRLPKRGFNSLTRARNYEVRLTDLDRLPVDEIDLLALQVAGIVPGDALSAKVILSGAISRKVVLKGVGATKGAKAAIEAVGGSIAE.

The tract at residues 1–54 (MRLNTIKPGEGSKKTAKRVGRGIGSGLGKTCGRGHKGQKSRSGGFHKVGFEGGQ) is disordered. Gly residues predominate over residues 21–31 (RGIGSGLGKTC).

Belongs to the universal ribosomal protein uL15 family. Part of the 50S ribosomal subunit.

Functionally, binds to the 23S rRNA. The sequence is that of Large ribosomal subunit protein uL15 from Dechloromonas aromatica (strain RCB).